Here is a 188-residue protein sequence, read N- to C-terminus: Ribosome-recycling factor (188 aa).

Belongs to the RRF family.

It is found in the cytoplasm. In terms of biological role, responsible for the release of ribosomes from messenger RNA at the termination of protein biosynthesis. May increase the efficiency of translation by recycling ribosomes from one round of translation to another. This chain is Ribosome-recycling factor, found in Cereibacter sphaeroides (strain ATCC 17025 / ATH 2.4.3) (Rhodobacter sphaeroides).